Consider the following 445-residue polypeptide: Ribosomal protein uS12 methylthiotransferase RimO (445 aa).

In terms of domain architecture, MTTase N-terminal spans 6-121; sequence KKVAVVTLGC…ILETLEEAEK (116 aa). The [4Fe-4S] cluster site is built by cysteine 15, cysteine 50, cysteine 84, cysteine 159, cysteine 163, and cysteine 166. The 231-residue stretch at 145–375 folds into the Radical SAM core domain; it reads LSPKQYAYVK…MELQHDIAYE (231 aa). Positions 378 to 445 constitute a TRAM domain; the sequence is QRWVGQTLKV…SYDLMGEVVQ (68 aa).

The protein belongs to the methylthiotransferase family. RimO subfamily. Requires [4Fe-4S] cluster as cofactor.

It is found in the cytoplasm. It catalyses the reaction L-aspartate(89)-[ribosomal protein uS12]-hydrogen + (sulfur carrier)-SH + AH2 + 2 S-adenosyl-L-methionine = 3-methylsulfanyl-L-aspartate(89)-[ribosomal protein uS12]-hydrogen + (sulfur carrier)-H + 5'-deoxyadenosine + L-methionine + A + S-adenosyl-L-homocysteine + 2 H(+). Catalyzes the methylthiolation of an aspartic acid residue of ribosomal protein uS12. This chain is Ribosomal protein uS12 methylthiotransferase RimO, found in Desulfitobacterium hafniense (strain Y51).